Consider the following 664-residue polypeptide: Sulfoquinovosidase (664 aa).

Glu-135, Glu-270, Arg-283, Leu-284, and Trp-286 together coordinate 3-(6-sulfo-alpha-D-quinovosyl)glycerol. The active-site Nucleophile is the Asp-388. Glu-391 is a catalytic residue. Arg-438 contributes to the 3-(6-sulfo-alpha-D-quinovosyl)glycerol binding site. Asp-455 acts as the Proton donor in catalysis. 3-(6-sulfo-alpha-D-quinovosyl)glycerol is bound at residue His-520.

The protein belongs to the glycosyl hydrolase 31 family.

It carries out the reaction 3-(6-sulfo-alpha-D-quinovosyl)glycerol + H2O = 6-sulfo-alpha-D-quinovose + glycerol. Functionally, part of the sulfoquinovose monooxygenase (sulfo-SMO) pathway, a D-sulfoquinovose degradation pathway that enables the complete utilization of all carbons within sulfoquinovose (SQ) with concomitant production of inorganic sulfite. Catalyzes the first step of the pathway, the hydrolysis of sulfoquinovosyl glycerol (SQGro) to release sulfoquinovose (SQ). Hydrolyzes both epimers of SQGro, with a preference for the natural 2'R isomer. In vitro, can use the substrate analog para-nitrophenyl alpha-sulfoquinovoside (PNPSQ), but shows no detectable activity toward 4-nitrophenyl alpha-D-glucopyranoside (PNPGlc). The polypeptide is Sulfoquinovosidase (Agrobacterium fabrum (strain C58 / ATCC 33970) (Agrobacterium tumefaciens (strain C58))).